Here is a 467-residue protein sequence, read N- to C-terminus: MATGKIVQIIGAVVDVEFPQSDVPSVYDALNVKDSKERLVLEVQQQLGGGVVRCIVMGSSDGLRRGVEVVNTGAPISVPVGTKTLGRIMNVLGDAIDERGEIGAEELYSIHRPAPSYEEQSNATELLETGVKVIDLICPFAKGGKIGLFGGAGVGKTVNMMELINNIALQHSGLSVFAGVGERTREGNDFYHEMQEAGVVNIEKPEESKVAMVYGQMNEPPGNRLRVALTGLTMAERFRDEGRDVLLFVDNIYRYTLAGTEVSALLGRMPSAVGYQPTLAEEMGVLQERITSTKQGSITSVQAVYVPADDLTDPSPATTFAHLDATVVLNRNIAAMGLYPAIDPLDSTSRQLDPLVVGQEHYDTARGVQQTLQRYKELKDIIAILGMDELSESDKQVVARARKIERFLTQPYHVAEVFTGDPGVYVPLKETLRGFKGLLAGEYDDIPEQAFMYCGTIDEAIENAKKL.

150–157 is an ATP binding site; that stretch reads GGAGVGKT.

This sequence belongs to the ATPase alpha/beta chains family. F-type ATPases have 2 components, CF(1) - the catalytic core - and CF(0) - the membrane proton channel. CF(1) has five subunits: alpha(3), beta(3), gamma(1), delta(1), epsilon(1). CF(0) has three main subunits: a(1), b(2) and c(9-12). The alpha and beta chains form an alternating ring which encloses part of the gamma chain. CF(1) is attached to CF(0) by a central stalk formed by the gamma and epsilon chains, while a peripheral stalk is formed by the delta and b chains.

The protein resides in the cell inner membrane. It catalyses the reaction ATP + H2O + 4 H(+)(in) = ADP + phosphate + 5 H(+)(out). Its function is as follows. Produces ATP from ADP in the presence of a proton gradient across the membrane. The catalytic sites are hosted primarily by the beta subunits. This Vibrio vulnificus (strain YJ016) protein is ATP synthase subunit beta.